The chain runs to 325 residues: UPF0285 protein MMP0642 (325 aa).

It belongs to the UPF0285 family.

In Methanococcus maripaludis (strain DSM 14266 / JCM 13030 / NBRC 101832 / S2 / LL), this protein is UPF0285 protein MMP0642.